The sequence spans 303 residues: Methionyl-tRNA formyltransferase (303 aa).

108-111 (SDLP) is a binding site for (6S)-5,6,7,8-tetrahydrofolate.

This sequence belongs to the Fmt family.

The catalysed reaction is L-methionyl-tRNA(fMet) + (6R)-10-formyltetrahydrofolate = N-formyl-L-methionyl-tRNA(fMet) + (6S)-5,6,7,8-tetrahydrofolate + H(+). Functionally, attaches a formyl group to the free amino group of methionyl-tRNA(fMet). The formyl group appears to play a dual role in the initiator identity of N-formylmethionyl-tRNA by promoting its recognition by IF2 and preventing the misappropriation of this tRNA by the elongation apparatus. This is Methionyl-tRNA formyltransferase from Rickettsia canadensis (strain McKiel).